The following is a 259-amino-acid chain: UPF0246 protein PLES_14941 (259 aa).

It belongs to the UPF0246 family.

The polypeptide is UPF0246 protein PLES_14941 (Pseudomonas aeruginosa (strain LESB58)).